A 237-amino-acid chain; its full sequence is Phosphoribosylaminoimidazole-succinocarboxamide synthase (237 aa).

The protein belongs to the SAICAR synthetase family.

The catalysed reaction is 5-amino-1-(5-phospho-D-ribosyl)imidazole-4-carboxylate + L-aspartate + ATP = (2S)-2-[5-amino-1-(5-phospho-beta-D-ribosyl)imidazole-4-carboxamido]succinate + ADP + phosphate + 2 H(+). The protein operates within purine metabolism; IMP biosynthesis via de novo pathway; 5-amino-1-(5-phospho-D-ribosyl)imidazole-4-carboxamide from 5-amino-1-(5-phospho-D-ribosyl)imidazole-4-carboxylate: step 1/2. The polypeptide is Phosphoribosylaminoimidazole-succinocarboxamide synthase (Edwardsiella ictaluri (strain 93-146)).